A 188-amino-acid chain; its full sequence is Elongation factor P (188 aa).

The protein belongs to the elongation factor P family.

The protein resides in the cytoplasm. It participates in protein biosynthesis; polypeptide chain elongation. Involved in peptide bond synthesis. Stimulates efficient translation and peptide-bond synthesis on native or reconstituted 70S ribosomes in vitro. Probably functions indirectly by altering the affinity of the ribosome for aminoacyl-tRNA, thus increasing their reactivity as acceptors for peptidyl transferase. The protein is Elongation factor P of Natranaerobius thermophilus (strain ATCC BAA-1301 / DSM 18059 / JW/NM-WN-LF).